Consider the following 1040-residue polypeptide: Multidrug resistance protein MdtB (1040 aa).

Helical transmembrane passes span 16–36 (FILR…AGLV), 342–362 (DVQF…YLFL), 373–393 (IAVP…GFSV), 396–416 (LTLM…IVVI), 440–460 (IGFT…PLLF), 472–492 (FAVT…TLTP), 537–557 (WITL…YIVI), 865–885 (STIW…GVLY), 888–908 (FIHP…ALLA), 911–931 (ISGS…IGIV), 968–988 (ILMT…STGV), and 1002–1022 (GGLV…YLLF).

This sequence belongs to the resistance-nodulation-cell division (RND) (TC 2.A.6) family. MdtB subfamily. In terms of assembly, part of a tripartite efflux system composed of MdtA, MdtB and MdtC. MdtB forms a heteromultimer with MdtC.

The protein resides in the cell inner membrane. This chain is Multidrug resistance protein MdtB, found in Musicola paradisiaca (strain Ech703) (Dickeya paradisiaca).